A 385-amino-acid polypeptide reads, in one-letter code: MKLRAEDVLANGTSRHKVQIDMERQVQIAKDLLAQKKFLEAAKRCQQTLDSLPKDGLLPDPELFTIFAQAVYNMEVQNSGNLFGDALLAGDDGSGSESESEPESDVSNGEEGNENGQTEIPNSRMFQFDQEEEDLTGDVDSGDSEDSGEGSEEEEENVEKEEERLALHELANFSPANEHDDEIEDVSQLRKSGFHIYFENDLYENALDLLAQALMLLGRPTADGQSLTENSRLRIGDVYILMGDIEREAEMFSRAIHHYLKALGYYKTLKPAEQVTEKVIQAEFLVCDALRWVDQVPAKDKLKRFKHAKALLEKHMTTRPKDSELQQARLAQIQDDIDEVQENQQHGSKRPLSQPTTSIGFPALEKPLGDFNDLSQLVKKKPRRH.

The important for interaction with heterotetrameric histone H3 and H4 and for interaction with dimeric histone H2A and H2B stretch occupies residues 80-199 (GNLFGDALLA…RKSGFHIYFE (120 aa)). Composition is skewed to low complexity over residues 85–97 (DALL…SGSE) and 105–116 (DVSNGEEGNENG). A disordered region spans residues 85-163 (DALLAGDDGS…EEENVEKEEE (79 aa)). Residues 129-160 (DQEEEDLTGDVDSGDSEDSGEGSEEEEENVEK) show a composition bias toward acidic residues. Ser-174 carries the phosphoserine modification. TPR repeat units follow at residues 186-220 (VSQL…LGRP), 229-262 (ENSR…YLKA), and 289-322 (ALRW…RPKD). The interval 248-332 (EAEMFSRAIH…SELQQARLAQ (85 aa)) is interaction with dimeric histone H2A and H2B. Positions 340 to 385 (VQENQQHGSKRPLSQPTTSIGFPALEKPLGDFNDLSQLVKKKPRRH) are disordered. Positions 342–359 (ENQQHGSKRPLSQPTTSI) are enriched in polar residues.

It belongs to the NASP family. As to quaternary structure, homodimer. The homodimer interacts with a histone tetramer containing H3 and H4; the interaction is direct. The homodimer interacts with heterodimeric histone H2A and H2B; the interaction is direct. Component of the nuclear histone acetyltransferase B (HAT-B) complex composed of at least HAT1, HAT2 and HIF1. Does not interact with HAT1 in the absence of HAT2. Interacts with histones H3 and H4 in a HAT1/HAT2 dependent manner. Interaction with heterotetrameric histone H3 and H4 precludes interaction with dimeric histone H2A and H2B, irrespective of the fact that their binding involves non-identical regions of the protein.

It is found in the nucleus. Functionally, histone H3 and H4 specific chaperone component of the nuclear histone acetyltransferase B (HAT-B) complex. Involved in chromatin assembly and telomere silencing. In Saccharomyces cerevisiae (strain ATCC 204508 / S288c) (Baker's yeast), this protein is HAT1-interacting factor 1 (HIF1).